Here is a 153-residue protein sequence, read N- to C-terminus: MDQETVGNIVLLAIVTLISVVQNGFFAHKVEHESKTHNGRSFQRTGPLAFERVYTANQNCVDAYPTFLVMLWSAGLLCSQVPAAFAGLMYLFVRQKYFVGYLGERTQSTPGYIFGKRIILFLFAMSLAGILNYFLIAFFGSDFENYIKTVTTT.

Residues 1-8 (MDQETVGN) are Lumenal-facing. A helical membrane pass occupies residues 9-30 (IVLLAIVTLISVVQNGFFAHKV). The Cytoplasmic segment spans residues 31 to 52 (EHESKTHNGRSFQRTGPLAFER). A helical transmembrane segment spans residues 53–77 (VYTANQNCVDAYPTFLVMLWSAGLL). Residues 78 to 80 (CSQ) are Lumenal-facing. The helical transmembrane segment at 81–102 (VPAAFAGLMYLFVRQKYFVGYL) threads the bilayer. The Cytoplasmic portion of the chain corresponds to 103–107 (GERTQ). The stretch at 108 to 115 (STPGYIFG) is an intramembrane region. The helical transmembrane segment at 116–128 (KRIILFLFAMSLA) threads the bilayer. Over 129 to 153 (GILNYFLIAFFGSDFENYIKTVTTT) the chain is Lumenal.

The protein belongs to the MAPEG family. As to quaternary structure, homotrimer. Interacts with LTC4S and ALOX5.

It localises to the nucleus membrane. Its subcellular location is the endoplasmic reticulum membrane. Its function is as follows. Required for leukotriene biosynthesis by ALOX5 (5-lipoxygenase). Anchors ALOX5 to the membrane. Binds arachidonic acid, and could play an essential role in the transfer of arachidonic acid to ALOX5. Binds to MK-886, a compound that blocks the biosynthesis of leukotrienes. In Ovis aries (Sheep), this protein is Arachidonate 5-lipoxygenase-activating protein (ALOX5AP).